The following is a 66-amino-acid chain: Toxin Tppa1 (66 aa).

Residues 1 to 63 (KDGYLVGNDG…TWSRSTNRCG (63 aa)) enclose the LCN-type CS-alpha/beta domain. 4 disulfide bridges follow: Cys-11–Cys-62, Cys-15–Cys-37, Cys-23–Cys-43, and Cys-27–Cys-45.

The protein belongs to the long (4 C-C) scorpion toxin superfamily. Sodium channel inhibitor family. Beta subfamily. As to expression, expressed by the venom gland.

Its subcellular location is the secreted. Its function is as follows. Beta toxins bind voltage-independently at site-4 of sodium channels (Nav) and shift the voltage of activation toward more negative potentials thereby affecting sodium channel activation and promoting spontaneous and repetitive firing. This chain is Toxin Tppa1, found in Tityus pachyurus (Colombian scorpion).